A 243-amino-acid polypeptide reads, in one-letter code: Asnovolin H synthase nvfL (243 aa).

Helical transmembrane passes span 20-42 (ANTL…AYYS), 51-71 (ALIP…IHCP), 75-95 (FVRI…YAAI), 112-132 (LPFI…ALAA), 138-160 (IAFV…SQLL), 169-189 (SYVV…MVTI), and 205-225 (LLLW…FCFY).

This sequence belongs to the paxB family.

The protein resides in the membrane. The enzyme catalyses (3R)-[(10S)-11-epoxyfarnesyl]-2,3,5-trimethyl-6-oxido-4-oxocyclohexa-1,5-diene-1-carboxylate + H(+) = asnovolin H. Its pathway is secondary metabolite biosynthesis; terpenoid biosynthesis. In terms of biological role, terpene cyclase; part of the gene cluster that mediates the biosynthesis of novofumigatonin, a heavily oxygenated meroterpenoid containing a unique orthoester moiety. The first step of the pathway is the synthesis of 3,5-dimethylorsellinic acid (DMOA) by the polyketide synthase nvfA via condensation of one acetyl-CoA starter unit with 3 malonyl-CoA units and 2 methylations. DMOA is then converted to farnesyl-DMOA by the farnesyltransferase nvfB. Epoxydation by FAD-dependent monooxygenase nvfK, followed by a protonation-initiated cyclization catalyzed by the terpene cyclase nvfL leads to the production of asnavolin H. The short chain dehydrogenase nvfC then as a 3-OH dehydrogenase of asnovolin H to yield chemesin D. There are two branches to synthesize asnovolin A from chemesin D. In one branch, chemesin D undergoes Baeyer-Villiger oxidation by nvfH, methylation by nvfJ, and enoyl reduction by the nvfM D enoylreductase that reduces the double bond between C-5'and C-6', to form respectively asnovolin I, asnovolin K, and asnovolin A. In the other branch, the methylation precedes the Baeyer-Villiger oxidation and the enoyl reduction to yield asnovolin A via the asnovolin J intermediate. Asnovolin A is further converted to fumigatonoid A by the Fe(II)/2-oxoglutarate-dependent dioxygenase nvfI that catalyzes an endoperoxidation reaction. The alpha/beta hydrolase nvfD then acts as an epimerase that converts fumigatonoid A to its C-5' epimer, which then undergoes spontaneous or nvfD-catalyzed lactonization. The following step utilizes the ketoreductase nvfG to produce fumigatonoid B. The dioxygenase nvfE further converts fumigatonoid B into fumigatonoid C. Finally the Fe(II)/2-oxoglutarate-dependent dioxygenase nvfF catalyzes two rounds of oxidation to transform fumigatonoid C into the end product, novofumigatonin A. The protein is Asnovolin H synthase nvfL of Aspergillus novofumigatus (strain IBT 16806).